The primary structure comprises 96 residues: Co-chaperonin GroES (96 aa).

This sequence belongs to the GroES chaperonin family. As to quaternary structure, heptamer of 7 subunits arranged in a ring. Interacts with the chaperonin GroEL.

The protein resides in the cytoplasm. Functionally, together with the chaperonin GroEL, plays an essential role in assisting protein folding. The GroEL-GroES system forms a nano-cage that allows encapsulation of the non-native substrate proteins and provides a physical environment optimized to promote and accelerate protein folding. GroES binds to the apical surface of the GroEL ring, thereby capping the opening of the GroEL channel. This Tremblaya princeps protein is Co-chaperonin GroES.